Reading from the N-terminus, the 54-residue chain is U1-ctenitoxin-Pr1a (54 aa).

5 disulfide bridges follow: Cys-2-Cys-19, Cys-9-Cys-25, Cys-16-Cys-51, Cys-18-Cys-39, and Cys-27-Cys-37.

In terms of tissue distribution, expressed by the venom gland.

It localises to the secreted. Functionally, omega-agatoxins are antagonists of voltage-gated calcium channels (Cav). Causes rapid general flaccid paralysis followed by death in 10-30 minutes when injected in mice at dose levels of 5 ug per mouse. This Phoneutria reidyi (Brazilian Amazonian armed spider) protein is U1-ctenitoxin-Pr1a.